We begin with the raw amino-acid sequence, 488 residues long: Probable glycine dehydrogenase (decarboxylating) subunit 2 (488 aa).

At K274 the chain carries N6-(pyridoxal phosphate)lysine.

Belongs to the GcvP family. C-terminal subunit subfamily. In terms of assembly, the glycine cleavage system is composed of four proteins: P, T, L and H. In this organism, the P 'protein' is a heterodimer of two subunits. It depends on pyridoxal 5'-phosphate as a cofactor.

It carries out the reaction N(6)-[(R)-lipoyl]-L-lysyl-[glycine-cleavage complex H protein] + glycine + H(+) = N(6)-[(R)-S(8)-aminomethyldihydrolipoyl]-L-lysyl-[glycine-cleavage complex H protein] + CO2. In terms of biological role, the glycine cleavage system catalyzes the degradation of glycine. The P protein binds the alpha-amino group of glycine through its pyridoxal phosphate cofactor; CO(2) is released and the remaining methylamine moiety is then transferred to the lipoamide cofactor of the H protein. The sequence is that of Probable glycine dehydrogenase (decarboxylating) subunit 2 from Listeria monocytogenes serotype 4b (strain F2365).